The following is a 254-amino-acid chain: MKPEESECLCIGVLPARWNSSRYPGKPLAKIHGKSLIQRTYENASQSSLLDKIVVATDDQHIIDHVTDFGGYAVMTSPTCSNGTERTGEVARKYFPKAEIIVNIQGDEPCLNSEVVDALVQKLRSSPEAELVTPVALTTDREEILTEKKVKCVFDSEGRALYFSRSPIPFILKKATPVYLHIGVYAFKREALFRYLQHSSTPLSDAEDLEQLRFLEHGGKIHVCIVDAKSPSVDYPEDIAKVEQYITCLSNAYF.

Belongs to the KdsB family.

Its subcellular location is the cytoplasm. It catalyses the reaction 3-deoxy-alpha-D-manno-oct-2-ulosonate + CTP = CMP-3-deoxy-beta-D-manno-octulosonate + diphosphate. It participates in nucleotide-sugar biosynthesis; CMP-3-deoxy-D-manno-octulosonate biosynthesis; CMP-3-deoxy-D-manno-octulosonate from 3-deoxy-D-manno-octulosonate and CTP: step 1/1. Its pathway is bacterial outer membrane biogenesis; lipopolysaccharide biosynthesis. In terms of biological role, activates KDO (a required 8-carbon sugar) for incorporation into bacterial lipopolysaccharide in Gram-negative bacteria. This Chlamydia pneumoniae (Chlamydophila pneumoniae) protein is 3-deoxy-manno-octulosonate cytidylyltransferase.